The chain runs to 205 residues: Small ribosomal subunit protein uS4 (205 aa).

Positions 94-157 (SRLDTVVYRM…KQIPLIQESV (64 aa)) constitute an S4 RNA-binding domain.

Belongs to the universal ribosomal protein uS4 family. As to quaternary structure, part of the 30S ribosomal subunit. Contacts protein S5. The interaction surface between S4 and S5 is involved in control of translational fidelity.

In terms of biological role, one of the primary rRNA binding proteins, it binds directly to 16S rRNA where it nucleates assembly of the body of the 30S subunit. With S5 and S12 plays an important role in translational accuracy. The polypeptide is Small ribosomal subunit protein uS4 (Rickettsia felis (strain ATCC VR-1525 / URRWXCal2) (Rickettsia azadi)).